Here is a 218-residue protein sequence, read N- to C-terminus: Flagellar calcium-binding protein TB-24 (218 aa).

The interval 1-27 (MGCSASKDTTNSKDGAASKGGKDGKTT) is disordered. EF-hand domains lie at 48 to 83 (ESKSRRIELFKQFDTNGTGKLGFREVLDGCYGILKL), 84 to 119 (DEFTTHLPDIVQRAFDKAKDLGNKVKGVGEEDLVEF), 130 to 165 (YDIFELTVMFDTMDKDGSLLLELQEFKEALPKLKEW), and 167 to 202 (VDITDATTVFNEIDTNGSGVVTFDEFSCWAVTKKLQ). Asp61, Asn63, Thr65, Lys67, and Glu72 together coordinate Ca(2+). Residues Asp143, Asp145, Ser147, Glu154, Asp180, Asn182, Ser184, and Glu191 each coordinate Ca(2+).

It belongs to the calflagin family.

It is found in the cell projection. The protein localises to the cilium. It localises to the flagellum. In terms of biological role, may contribute to the rapid motility of the trypanosomes, playing a role either in flagellar structure or in calcium metabolism. Could alternate between a GDP-bound inactive form to a calcium/GTP-bound active form. The chain is Flagellar calcium-binding protein TB-24 from Trypanosoma brucei brucei.